We begin with the raw amino-acid sequence, 415 residues long: Adenylosuccinate synthetase (415 aa).

Residues 11 to 17 and 39 to 41 each bind GTP; these read GDEGKGK and GHT. The active-site Proton acceptor is the D12. The Mg(2+) site is built by D12 and G39. IMP is bound by residues 12-15, 37-40, T124, R138, Q218, T233, and R297; these read DEGK and NAGH. H40 (proton donor) is an active-site residue. Residue 293–299 coordinates substrate; that stretch reads TTTGRAR. Residues R299, 325–327, and 403–405 each bind GTP; these read KLD and STS.

It belongs to the adenylosuccinate synthetase family. Homodimer. The cofactor is Mg(2+).

It is found in the cytoplasm. It catalyses the reaction IMP + L-aspartate + GTP = N(6)-(1,2-dicarboxyethyl)-AMP + GDP + phosphate + 2 H(+). It functions in the pathway purine metabolism; AMP biosynthesis via de novo pathway; AMP from IMP: step 1/2. Its function is as follows. Plays an important role in the de novo pathway of purine nucleotide biosynthesis. Catalyzes the first committed step in the biosynthesis of AMP from IMP. The sequence is that of Adenylosuccinate synthetase from Helicobacter hepaticus (strain ATCC 51449 / 3B1).